A 133-amino-acid chain; its full sequence is Small ribosomal subunit protein eS24 (133 aa).

Residue M1 is modified to N-acetylmethionine. Residue T9 is modified to Phosphothreonine. Residue K37 forms a Glycyl lysine isopeptide (Lys-Gly) (interchain with G-Cter in SUMO2) linkage. The segment at 92–133 (ARHGLYEKKKTSRKQRKERKNRMKKVRGTAKANVGAGKKPKE) is disordered. Positions 101–119 (KTSRKQRKERKNRMKKVRG) are enriched in basic residues.

It belongs to the eukaryotic ribosomal protein eS24 family. In terms of assembly, component of the small ribosomal subunit. Part of the small subunit (SSU) processome, composed of more than 70 proteins and the RNA chaperone small nucleolar RNA (snoRNA) U3.

Its subcellular location is the cytoplasm. It localises to the nucleus. It is found in the nucleolus. Its function is as follows. Component of the small ribosomal subunit. The ribosome is a large ribonucleoprotein complex responsible for the synthesis of proteins in the cell. Required for processing of pre-rRNA and maturation of 40S ribosomal subunits. Part of the small subunit (SSU) processome, first precursor of the small eukaryotic ribosomal subunit. During the assembly of the SSU processome in the nucleolus, many ribosome biogenesis factors, an RNA chaperone and ribosomal proteins associate with the nascent pre-rRNA and work in concert to generate RNA folding, modifications, rearrangements and cleavage as well as targeted degradation of pre-ribosomal RNA by the RNA exosome. The polypeptide is Small ribosomal subunit protein eS24 (RPS24) (Oryctolagus cuniculus (Rabbit)).